The primary structure comprises 275 residues: Glucosamine-6-phosphate deaminase 2 (275 aa).

Asp-72 (proton acceptor; for enolization step) is an active-site residue. Residues 102–131 (NNAHILDGNASDLQAECEDFERKIKEAGGI) are a coiled coil. Asp-141 acts as the For ring-opening step in catalysis. The active-site Proton acceptor; for ring-opening step is His-143. The For ring-opening step role is filled by Glu-148.

This sequence belongs to the glucosamine/galactosamine-6-phosphate isomerase family. In terms of assembly, homohexamer.

It is found in the cytoplasm. The enzyme catalyses alpha-D-glucosamine 6-phosphate + H2O = beta-D-fructose 6-phosphate + NH4(+). Its function is as follows. Catalyzes the reversible conversion of alpha-D-glucosamine 6-phosphate (GlcN-6P) into beta-D-fructose 6-phosphate (Fru-6P) and ammonium ion, a regulatory reaction step in de novo uridine diphosphate-N-acetyl-alpha-D-glucosamine (UDP-GlcNAc) biosynthesis via hexosamine pathway. This is Glucosamine-6-phosphate deaminase 2 from Xenopus laevis (African clawed frog).